Here is a 485-residue protein sequence, read N- to C-terminus: NADH-quinone oxidoreductase subunit N (485 aa).

The next 14 membrane-spanning stretches (helical) occupy residues Leu-8–Ile-28, Phe-35–Val-55, Gly-71–Ala-91, Phe-105–Leu-125, Ser-127–Phe-147, Tyr-159–Ala-179, Leu-203–Phe-223, Pro-235–Met-255, Val-271–Gln-291, Leu-297–Gln-317, Val-326–Leu-346, Ala-373–Ile-393, Trp-408–Val-430, and Ile-455–Ile-475.

It belongs to the complex I subunit 2 family. In terms of assembly, NDH-1 is composed of 13 different subunits. Subunits NuoA, H, J, K, L, M, N constitute the membrane sector of the complex.

Its subcellular location is the cell inner membrane. It carries out the reaction a quinone + NADH + 5 H(+)(in) = a quinol + NAD(+) + 4 H(+)(out). Functionally, NDH-1 shuttles electrons from NADH, via FMN and iron-sulfur (Fe-S) centers, to quinones in the respiratory chain. The immediate electron acceptor for the enzyme in this species is believed to be ubiquinone. Couples the redox reaction to proton translocation (for every two electrons transferred, four hydrogen ions are translocated across the cytoplasmic membrane), and thus conserves the redox energy in a proton gradient. This is NADH-quinone oxidoreductase subunit N from Escherichia coli O139:H28 (strain E24377A / ETEC).